The following is a 303-amino-acid chain: N-acetyl-D-glucosamine kinase (303 aa).

Residues 4-11 and 133-140 each bind ATP; these read GFDVGGTK and GFGGGLVF. Zn(2+) contacts are provided by H157, C177, C179, and C184.

This sequence belongs to the ROK (NagC/XylR) family. NagK subfamily.

The enzyme catalyses N-acetyl-D-glucosamine + ATP = N-acetyl-D-glucosamine 6-phosphate + ADP + H(+). Its pathway is cell wall biogenesis; peptidoglycan recycling. Functionally, catalyzes the phosphorylation of N-acetyl-D-glucosamine (GlcNAc) derived from cell-wall degradation, yielding GlcNAc-6-P. In Photobacterium profundum (strain SS9), this protein is N-acetyl-D-glucosamine kinase.